A 433-amino-acid chain; its full sequence is Signal recognition particle 54 kDa protein (433 aa).

GTP contacts are provided by residues 106–113, 186–190, and 244–247; these read GVEGSGKT, DTAGR, and TKMD.

Belongs to the GTP-binding SRP family. SRP54 subfamily. Part of the signal recognition particle protein translocation system, which is composed of SRP and FtsY. Archaeal SRP consists of a 7S RNA molecule of 300 nucleotides and two protein subunits: SRP54 and SRP19.

The protein localises to the cytoplasm. It catalyses the reaction GTP + H2O = GDP + phosphate + H(+). Involved in targeting and insertion of nascent membrane proteins into the cytoplasmic membrane. Binds to the hydrophobic signal sequence of the ribosome-nascent chain (RNC) as it emerges from the ribosomes. The SRP-RNC complex is then targeted to the cytoplasmic membrane where it interacts with the SRP receptor FtsY. The chain is Signal recognition particle 54 kDa protein from Pyrobaculum aerophilum (strain ATCC 51768 / DSM 7523 / JCM 9630 / CIP 104966 / NBRC 100827 / IM2).